The chain runs to 90 residues: DNA-directed RNA polymerase subunit omega (90 aa).

It belongs to the RNA polymerase subunit omega family. The RNAP catalytic core consists of 2 alpha, 1 beta, 1 beta' and 1 omega subunit. When a sigma factor is associated with the core the holoenzyme is formed, which can initiate transcription.

The catalysed reaction is RNA(n) + a ribonucleoside 5'-triphosphate = RNA(n+1) + diphosphate. Functionally, promotes RNA polymerase assembly. Latches the N- and C-terminal regions of the beta' subunit thereby facilitating its interaction with the beta and alpha subunits. The sequence is that of DNA-directed RNA polymerase subunit omega from Streptomyces griseus subsp. griseus (strain JCM 4626 / CBS 651.72 / NBRC 13350 / KCC S-0626 / ISP 5235).